The chain runs to 265 residues: 3-methyl-2-oxobutanoate hydroxymethyltransferase (265 aa).

The Mg(2+) site is built by Asp43 and Asp82. Residues 43–44 (DS), Asp82, and Lys111 contribute to the 3-methyl-2-oxobutanoate site. Glu113 is a binding site for Mg(2+). Residue Glu180 is the Proton acceptor of the active site.

It belongs to the PanB family. In terms of assembly, homodecamer; pentamer of dimers. The cofactor is Mg(2+).

It is found in the cytoplasm. It catalyses the reaction 3-methyl-2-oxobutanoate + (6R)-5,10-methylene-5,6,7,8-tetrahydrofolate + H2O = 2-dehydropantoate + (6S)-5,6,7,8-tetrahydrofolate. It functions in the pathway cofactor biosynthesis; (R)-pantothenate biosynthesis; (R)-pantoate from 3-methyl-2-oxobutanoate: step 1/2. In terms of biological role, catalyzes the reversible reaction in which hydroxymethyl group from 5,10-methylenetetrahydrofolate is transferred onto alpha-ketoisovalerate to form ketopantoate. This is 3-methyl-2-oxobutanoate hydroxymethyltransferase from Francisella tularensis subsp. novicida (strain U112).